Reading from the N-terminus, the 118-residue chain is Mediator of RNA polymerase II transcription subunit 11 (118 aa).

This sequence belongs to the Mediator complex subunit 11 family. Component of the Mediator complex.

The protein resides in the nucleus. Its function is as follows. Component of the Mediator complex, a coactivator involved in the regulated transcription of nearly all RNA polymerase II-dependent genes. Mediator functions as a bridge to convey information from gene-specific regulatory proteins to the basal RNA polymerase II transcription machinery. Mediator is recruited to promoters by direct interactions with regulatory proteins and serves as a scaffold for the assembly of a functional pre-initiation complex with RNA polymerase II and the general transcription factors. The chain is Mediator of RNA polymerase II transcription subunit 11 (med11) from Xenopus tropicalis (Western clawed frog).